Here is a 194-residue protein sequence, read N- to C-terminus: MIGRLRGILAYKQPPWLVIDVGGVGYELEAPMSTFYDLPDVGRDVILFTHYAQKEDSVSLYGFLREGERRLFRDVQKVTGIGAKIALAVLSGVSVDEFARLITSGDITALTRIPGIGKKTAERMVVELRDRAADFSSGAPITGQLGPDAVSEATVALQQLGYKPAEAARMARDAGAEGDEVATVIRKALQAALR.

Positions 1-64 (MIGRLRGILA…EDSVSLYGFL (64 aa)) are domain I. The domain II stretch occupies residues 65 to 140 (REGERRLFRD…RAADFSSGAP (76 aa)). Residues 140–144 (PITGQ) form a flexible linker region. The tract at residues 145–194 (LGPDAVSEATVALQQLGYKPAEAARMARDAGAEGDEVATVIRKALQAALR) is domain III.

This sequence belongs to the RuvA family. As to quaternary structure, homotetramer. Forms an RuvA(8)-RuvB(12)-Holliday junction (HJ) complex. HJ DNA is sandwiched between 2 RuvA tetramers; dsDNA enters through RuvA and exits via RuvB. An RuvB hexamer assembles on each DNA strand where it exits the tetramer. Each RuvB hexamer is contacted by two RuvA subunits (via domain III) on 2 adjacent RuvB subunits; this complex drives branch migration. In the full resolvosome a probable DNA-RuvA(4)-RuvB(12)-RuvC(2) complex forms which resolves the HJ.

Its subcellular location is the cytoplasm. Its function is as follows. The RuvA-RuvB-RuvC complex processes Holliday junction (HJ) DNA during genetic recombination and DNA repair, while the RuvA-RuvB complex plays an important role in the rescue of blocked DNA replication forks via replication fork reversal (RFR). RuvA specifically binds to HJ cruciform DNA, conferring on it an open structure. The RuvB hexamer acts as an ATP-dependent pump, pulling dsDNA into and through the RuvAB complex. HJ branch migration allows RuvC to scan DNA until it finds its consensus sequence, where it cleaves and resolves the cruciform DNA. The polypeptide is Holliday junction branch migration complex subunit RuvA (Xanthomonas axonopodis pv. citri (strain 306)).